A 360-amino-acid chain; its full sequence is 8-hydroxygeraniol dehydrogenase (360 aa).

Zn(2+)-binding residues include Cys-50, His-72, Cys-103, Cys-106, Cys-109, Cys-117, and Cys-166.

It belongs to the zinc-containing alcohol dehydrogenase family. Zn(2+) serves as cofactor. In terms of tissue distribution, present in seedlings and vascular tissues (at protein level). Restricted to the epidermis.

The catalysed reaction is (6E)-8-hydroxygeraniol + 2 NADP(+) = (6E)-8-oxogeranial + 2 NADPH + 2 H(+). In terms of biological role, dehydrogenase involved in the biosynthesis of oxogeranial from hydroxygeraniol, a precursor of the terpenoid indole alkaloids such as vinblastine and vincristine. This chain is 8-hydroxygeraniol dehydrogenase (10HGO), found in Catharanthus roseus (Madagascar periwinkle).